Reading from the N-terminus, the 259-residue chain is Type III pantothenate kinase (259 aa).

6–13 (DVGNTNCT) serves as a coordination point for ATP. Substrate is bound at residue 107-110 (GSDR). The active-site Proton acceptor is aspartate 109. Residue aspartate 129 coordinates K(+). Threonine 132 serves as a coordination point for ATP. Substrate is bound at residue threonine 184.

Belongs to the type III pantothenate kinase family. In terms of assembly, homodimer. NH4(+) serves as cofactor. The cofactor is K(+).

It localises to the cytoplasm. The enzyme catalyses (R)-pantothenate + ATP = (R)-4'-phosphopantothenate + ADP + H(+). The protein operates within cofactor biosynthesis; coenzyme A biosynthesis; CoA from (R)-pantothenate: step 1/5. In terms of biological role, catalyzes the phosphorylation of pantothenate (Pan), the first step in CoA biosynthesis. The chain is Type III pantothenate kinase from Listeria welshimeri serovar 6b (strain ATCC 35897 / DSM 20650 / CCUG 15529 / CIP 8149 / NCTC 11857 / SLCC 5334 / V8).